We begin with the raw amino-acid sequence, 489 residues long: Rhamnulokinase (489 aa).

Ala13–Arg17 provides a ligand contact to ATP. Cys68 and Cys222 are disulfide-bonded. Substrate is bound by residues Gly83 and His236 to Thr238. Residue Asp237 is the Proton acceptor of the active site. Position 259 (Thr259) interacts with ATP. Residue Asn296 participates in substrate binding. Gln304 serves as a coordination point for ATP. Cysteines 353 and 370 form a disulfide. Residue Gly402 participates in ATP binding. Residues Cys413 and Cys417 are joined by a disulfide bond.

The protein belongs to the rhamnulokinase family. In terms of assembly, monomer. Requires Mg(2+) as cofactor.

It carries out the reaction L-rhamnulose + ATP = L-rhamnulose 1-phosphate + ADP + H(+). The protein operates within carbohydrate degradation; L-rhamnose degradation; glycerone phosphate from L-rhamnose: step 2/3. In terms of biological role, involved in the catabolism of L-rhamnose (6-deoxy-L-mannose). Catalyzes the transfer of the gamma-phosphate group from ATP to the 1-hydroxyl group of L-rhamnulose to yield L-rhamnulose 1-phosphate. The sequence is that of Rhamnulokinase from Escherichia coli O127:H6 (strain E2348/69 / EPEC).